Reading from the N-terminus, the 370-residue chain is Membrane cofactor protein (370 aa).

The signal sequence occupies residues methionine 1–serine 32. Sushi domains are found at residues aspartate 33–arginine 96, lysine 97–lysine 159, isoleucine 160–valine 225, and valine 226–lysine 285. Over aspartate 33–glutamate 315 the chain is Extracellular. Intrachain disulfides connect cysteine 35-cysteine 80, cysteine 64-cysteine 94, cysteine 99-cysteine 141, cysteine 127-cysteine 157, cysteine 162-cysteine 210, cysteine 191-cysteine 223, cysteine 228-cysteine 270, and cysteine 256-cysteine 283. Asparagine 114 is a glycosylation site (N-linked (GlcNAc...) asparagine). A glycan (O-linked (GalNAc...) serine) is linked at serine 287. O-linked (GalNAc...) threonine glycosylation occurs at threonine 288. O-linked (GalNAc...) serine glycosylation occurs at serine 289. The O-linked (GalNAc...) threonine glycan is linked to threonine 292. Serine 294 is a glycosylation site (O-linked (GalNAc...) serine). O-linked (GalNAc...) threonine glycosylation occurs at threonine 296. A helical transmembrane segment spans residues tryptophan 316 to leucine 336. At histidine 337–serine 370 the chain is on the cytoplasmic side.

Interacts with C3b. Interacts with C4b. Interacts with moesin/MSN. In terms of processing, O-glycosylated.

Its subcellular location is the cytoplasmic vesicle. The protein resides in the secretory vesicle. It is found in the acrosome inner membrane. Its function is as follows. Acts as a cofactor for complement factor I, a serine protease which protects autologous cells against complement-mediated injury by cleaving C3b and C4b deposited on host tissue. May be involved in the fusion of the spermatozoa with the oocyte during fertilization. Also acts as a costimulatory factor for T-cells which induces the differentiation of CD4+ into T-regulatory 1 cells. T-regulatory 1 cells suppress immune responses by secreting interleukin-10, and therefore are thought to prevent autoimmunity. The protein is Membrane cofactor protein (CD46) of Saguinus oedipus (Cotton-top tamarin).